The following is a 754-amino-acid chain: Ribonucleoside-diphosphate reductase subunit alpha (754 aa).

The ATP-cone domain occupies 4 to 93; it reads INVIKSSGVS…MFALRKHVYG (90 aa). Substrate-binding positions include T206, 221-222, G250, 435-439, and 615-619; these read SC, NLCCE, and PCESS. The cysteines at positions 222 and 457 are disulfide-linked. Catalysis depends on N435, which acts as the Proton acceptor. The Cysteine radical intermediate role is filled by C437. The active-site Proton acceptor is the E439. The interval 621-641 is disordered; it reads QVSNSTNGYEPPRGPVSVKES.

This sequence belongs to the ribonucleoside diphosphate reductase large chain family. Heterodimer of a large and a small subunit.

It catalyses the reaction a 2'-deoxyribonucleoside 5'-diphosphate + [thioredoxin]-disulfide + H2O = a ribonucleoside 5'-diphosphate + [thioredoxin]-dithiol. With respect to regulation, under complex allosteric control mediated by deoxynucleoside triphosphates and ATP binding. The type of nucleotide bound at the specificity site determines substrate preference. It seems probable that ATP makes the enzyme reduce CDP and UDP, dGTP favors ADP reduction and dTTP favors GDP reduction. Functionally, provides the precursors necessary for DNA synthesis. Catalyzes the biosynthesis of deoxyribonucleotides from the corresponding ribonucleotides. In Escherichia coli (Bacteriophage T4), this protein is Ribonucleoside-diphosphate reductase subunit alpha (NRDA).